The chain runs to 209 residues: Uracil phosphoribosyltransferase (209 aa).

Residues arginine 79, arginine 104, and 131 to 139 (DPMLATGAS) each bind 5-phospho-alpha-D-ribose 1-diphosphate. Residues isoleucine 194 and 199–201 (GDA) contribute to the uracil site. Residue aspartate 200 participates in 5-phospho-alpha-D-ribose 1-diphosphate binding.

The protein belongs to the UPRTase family. It depends on Mg(2+) as a cofactor.

It catalyses the reaction UMP + diphosphate = 5-phospho-alpha-D-ribose 1-diphosphate + uracil. Its pathway is pyrimidine metabolism; UMP biosynthesis via salvage pathway; UMP from uracil: step 1/1. Its activity is regulated as follows. Allosterically activated by GTP. Catalyzes the conversion of uracil and 5-phospho-alpha-D-ribose 1-diphosphate (PRPP) to UMP and diphosphate. The sequence is that of Uracil phosphoribosyltransferase from Staphylococcus carnosus (strain TM300).